We begin with the raw amino-acid sequence, 166 residues long: Glutamyl-tRNA(Gln) amidotransferase subunit C, mitochondrial (166 aa).

The transit peptide at 1-44 directs the protein to the mitochondrion; sequence MIRGWTIFTLCKPSALVGSSHFNKQFNWAKSQLQFATKVPQQPY.

Belongs to the GatC family. As to quaternary structure, subunit of the heterotrimeric GatCAB amidotransferase (AdT) complex, composed of A, B and C subunits.

Its subcellular location is the mitochondrion. It catalyses the reaction L-glutamyl-tRNA(Gln) + L-glutamine + ATP + H2O = L-glutaminyl-tRNA(Gln) + L-glutamate + ADP + phosphate + H(+). In terms of biological role, allows the formation of correctly charged Gln-tRNA(Gln) through the transamidation of misacylated Glu-tRNA(Gln) in the mitochondria. The reaction takes place in the presence of glutamine and ATP through an activated gamma-phospho-Glu-tRNA(Gln). This Anopheles darlingi (Mosquito) protein is Glutamyl-tRNA(Gln) amidotransferase subunit C, mitochondrial.